Here is a 1788-residue protein sequence, read N- to C-terminus: U3 small nucleolar RNA-associated protein 10 (1788 aa).

One copy of the HEAT 1 repeat lies at 585–622 (LDFQAVVPYAIVALSDPAKKVRRAAAELVTVLGSFYET). Residues 884–905 (PATKRRRVGSSEKSVDSQSPAD) form a disordered region. 6 HEAT repeats span residues 926–962 (AKHPELLPSLFTTLSELQHLRTVVGSELGYLQSLVLS), 1049–1086 (QTVKEVIPPLIETFRKSRRNLVASTAELLTSFVVAYEH), 1257–1294 (LSIAEFIKSVEALLDRPNVILRQKVLRALERRVDSESI), 1301–1339 (EALLAFLPQLTAVIRESDDMNYKHTAVNCVDKIAEKYGK), 1703–1740 (EHHKEINSALLKHLRSEQAAVRLAVIKCEQELTARLGE), and 1744–1781 (QSLPEMLPFISELQDDDDEVVERENRRWIVGIEETLGE).

It belongs to the HEATR1/UTP10 family. Component of the ribosomal small subunit (SSU) processome.

It is found in the nucleus. The protein resides in the nucleolus. Its function is as follows. Involved in nucleolar processing of pre-18S ribosomal RNA. Involved in ribosome biosynthesis. This chain is U3 small nucleolar RNA-associated protein 10 (rbg-5), found in Neurospora crassa (strain ATCC 24698 / 74-OR23-1A / CBS 708.71 / DSM 1257 / FGSC 987).